Reading from the N-terminus, the 528-residue chain is GMP synthase [glutamine-hydrolyzing] (528 aa).

The Glutamine amidotransferase type-1 domain maps to 13-204 (SILILDFGSQ…VYKISCCAAD (192 aa)). Cys-90 acts as the Nucleophile in catalysis. Residues His-178 and Glu-180 contribute to the active site. Residues 205–403 (WTTETYIEET…LGLPAEIIKR (199 aa)) enclose the GMPS ATP-PPase domain. 232-238 (SGGVDSS) contacts ATP.

Homodimer.

The enzyme catalyses XMP + L-glutamine + ATP + H2O = GMP + L-glutamate + AMP + diphosphate + 2 H(+). The protein operates within purine metabolism; GMP biosynthesis; GMP from XMP (L-Gln route): step 1/1. In terms of biological role, catalyzes the synthesis of GMP from XMP. This Prochlorococcus marinus (strain MIT 9215) protein is GMP synthase [glutamine-hydrolyzing].